Consider the following 316-residue polypeptide: Probable peptidyl-tRNA hydrolase 2 (316 aa).

A disordered region spans residues 1–127 (MSENIPDIDP…SHPVDPQEPN (127 aa)). Residues 44–53 (PTPSSVTVDN) are compositionally biased toward polar residues. The segment covering 75-89 (IPEVPIPSSAISISS) has biased composition (low complexity). The 42-residue stretch at 128-169 (EVNNEYLAHLLDLGFDEYTAVLALKRTNSAGVEQAVAWIVER) folds into the UBA domain. The disordered stretch occupies residues 170–193 (SNESDFDEDSSSSENEADEEMGAV). Residues 173 to 190 (SDFDEDSSSSENEADEEM) are compositionally biased toward acidic residues.

The protein belongs to the PTH2 family.

The enzyme catalyses an N-acyl-L-alpha-aminoacyl-tRNA + H2O = an N-acyl-L-amino acid + a tRNA + H(+). Its function is as follows. The natural substrate for this enzyme may be peptidyl-tRNAs which drop off the ribosome during protein synthesis. The chain is Probable peptidyl-tRNA hydrolase 2 from Caenorhabditis elegans.